A 663-amino-acid chain; its full sequence is Polyunsaturated fatty acid lipoxygenase ALOX15 (663 aa).

Positions 2 to 115 constitute a PLAT domain; that stretch reads GLYRVRVSTG…ILSLPEGTAR (114 aa). Residues 116-663 form the Lipoxygenase domain; that stretch reads TVVDDPQGLF…PSRVENSVAI (548 aa). The Fe cation site is built by H361, H366, H541, H545, and I663.

Belongs to the lipoxygenase family. In terms of assembly, interacts with PEBP1; in response to IL13/interleukin-13, prevents the interaction of PEBP1 with RAF1 to activate the ERK signaling cascade. Fe cation serves as cofactor.

The protein localises to the cytoplasm. It is found in the cytosol. The protein resides in the cell membrane. It localises to the lipid droplet. The catalysed reaction is (5Z,8Z,11Z,14Z)-eicosatetraenoate + O2 = (12S)-hydroperoxy-(5Z,8Z,10E,14Z)-eicosatetraenoate. It catalyses the reaction (5Z,8Z,11Z,14Z)-eicosatetraenoate + O2 = (15S)-hydroperoxy-(5Z,8Z,11Z,13E)-eicosatetraenoate. The enzyme catalyses (9Z,12Z)-octadecadienoate + O2 = (13S)-hydroperoxy-(9Z,11E)-octadecadienoate. It carries out the reaction (5Z,8Z,11Z,14Z)-eicosatetraenoate + 2 O2 = (14R,15S)-dihydroperoxy-(5Z,8Z,10E,12E)-eicosatetraenoate. The catalysed reaction is (5Z,8Z,11Z,14Z)-eicosatetraenoate + 2 O2 = (8S,15S)-dihydroperoxy-(5Z,9E,11Z,13E)-eicosatetraenoate. It catalyses the reaction (14S,15R)-epoxy-(5Z,8Z,11Z)-eicosatrienoate + O2 = (8S)-hydroperoxy-(14S,15R)-epoxy-(5Z,9E,11Z)-eicosatrienoate. The enzyme catalyses (14S,15R)-epoxy-(5Z,8Z,11Z)-eicosatrienoate + O2 = (12S)-hydroperoxy-(14S,15R)-epoxy-(5Z,8Z,10E)-eicosatrienoate. It carries out the reaction (14R,15S)-epoxy-(5Z,8Z,11Z)-eicosatrienoate + O2 = (5S)-hydroperoxy-(14R,15S)-epoxy-(6E,8Z,11Z)-eicosatrienoate. The catalysed reaction is (14R,15S)-epoxy-(5Z,8Z,11Z)-eicosatrienoate + O2 = (12S)-hydroperoxy-(14R,15S)-epoxy-(5Z,8Z,10E)-eicosatrienoate. It catalyses the reaction (15R)-hydroperoxy-(5Z,8Z,11Z,13E)-eicosatetraenoate = 15-oxo-(5Z,8Z,11Z,13E)-eicosatetraenoate + H2O. The enzyme catalyses (15S)-hydroperoxy-(5Z,8Z,11Z,13E)-eicosatetraenoate = (14S,15S)-epoxy-(5Z,8Z,10E,12E)-eicosatetraenoate + H2O. It carries out the reaction (12S)-hydroperoxy-(5Z,8Z,10E,14Z)-eicosatetraenoate = (8S)-hydroxy-(11S,12S)-epoxy-(5Z,9E,14Z)-eicosatrienoate. The catalysed reaction is (4Z,7Z,10Z,13Z,16Z,19Z)-docosahexaenoate + O2 = 14-hydroperoxy-(4Z,7Z,10Z,12E,16Z,19Z)-docosahexaenoate. It catalyses the reaction (4Z,7Z,10Z,13Z,16Z)-docosapentaenoate + O2 = 14-hydroperoxy-(4Z,7Z,10Z,12E,16Z)-docosapentaenoate. The enzyme catalyses (7Z,10Z,13Z,16Z,19Z)-docosapentaenoate + O2 = 14-hydroperoxy-(7Z,10Z,12E,16Z,19Z)-docosapentaenoate. It carries out the reaction (4Z,7Z,10Z,13Z,16Z,19Z)-docosahexaenoate + O2 = (14S)-hydroperoxy-(4Z,7Z,10Z,12E,16Z,19Z)-docosahexaenoate. The catalysed reaction is (4Z,7Z,10Z,13Z,16Z,19Z)-docosahexaenoate + O2 = (17S)-hydroperoxy-(4Z,7Z,10Z,13Z,15E,19Z)-docosahexaenoate. It catalyses the reaction (7S)-hydroperoxy-(4Z,8E,10Z,13Z,16Z,19Z)-docosahexaenoate + O2 = (7S,14S)-dihydroperoxy-(4Z,8E,10Z,12E,16Z,19Z)-docosahexaenoate. The enzyme catalyses (7S)-hydroperoxy-(4Z,8E,10Z,13Z,16Z,19Z)-docosahexaenoate + O2 = (7S,17S)-dihydroperoxy-(4Z,8E,10Z,13Z,15E,19Z)-docosahexaenoate. It carries out the reaction (4Z,7Z,10Z,13Z,16Z,19Z)-docosahexaenoate + O2 = (11S)-hydroperoxy-(4Z,7Z,9E,13Z,16Z,19Z)-docosahexaenoate. The catalysed reaction is N-(5Z,8Z,11Z,14Z)-eicosatetraenoyl-taurine + O2 = N-(12S)-hydroperoxy-(5Z,8Z,10E,14Z)-eicosatetraenoyl-taurine. It catalyses the reaction N-(5Z,8Z,11Z,14Z)-eicosatetraenoyl-gamma-aminobutanoate + O2 = N-(12S)-hydroperoxy-(5Z,8Z,10E,14Z)-eicosatetraenoyl-gamma-aminobutanoate. The enzyme catalyses N-(5Z,8Z,11Z,14Z)-eicosatetraenoyl-glycine + O2 = N-(12S)-hydroperoxy-(5Z,8Z,10E,14Z)-eicosatetraenoyl-glycine. It carries out the reaction N-(5Z,8Z,11Z,14Z)-eicosatetraenoyl-L-alanine + O2 = N-(12S)-hydroperoxy-(5Z,8Z,10E,14Z)-eicosatetraenoyl-alanine. The catalysed reaction is N-(5Z,8Z,11Z,14Z)-eicosatetraenoyl-taurine + O2 = N-(15S)-hydroperoxy-(5Z,8Z,11Z,13E)-eicosatetraenoyl-taurine. It catalyses the reaction N-(5Z,8Z,11Z,14Z)-eicosatetraenoyl-gamma-aminobutanoate + O2 = N-(15S)-hydroperoxy-(5Z,8Z,11Z,13E)-eicosatetraenoyl-gamma-aminobutanoate. The enzyme catalyses N-(5Z,8Z,11Z,14Z)-eicosatetraenoyl-glycine + O2 = N-(15S)-hydroperoxy-(5Z,8Z,11Z,13E)-eicosatetraenoyl-glycine. It carries out the reaction N-(5Z,8Z,11Z,14Z)-eicosatetraenoyl-L-alanine + O2 = N-(15S)-hydroperoxy-(5Z,8Z,11Z,13E)-eicosatetraenoyl-alanine. Its pathway is lipid metabolism; hydroperoxy eicosatetraenoic acid biosynthesis. Non-heme iron-containing dioxygenase that catalyzes the stereo-specific peroxidation of free and esterified polyunsaturated fatty acids generating a spectrum of bioactive lipid mediators. It inserts peroxyl groups at C12 or C15 of arachidonate ((5Z,8Z,11Z,14Z)-eicosatetraenoate) producing both 12-hydroperoxyeicosatetraenoate/12-HPETE and 15-hydroperoxyeicosatetraenoate/15-HPETE. It may then act on 12-HPETE to produce hepoxilins, which may show pro-inflammatory properties. Can also peroxidize linoleate ((9Z,12Z)-octadecadienoate) to 13-hydroperoxyoctadecadienoate. May participate in the sequential oxidations of DHA ((4Z,7Z,10Z,13Z,16Z,19Z)-docosahexaenoate) to generate specialized pro-resolving mediators (SPMs)like resolvin D5 ((7S,17S)-diHPDHA) and (7S,14S)-diHPDHA, that actively down-regulate the immune response and have anti-aggregation properties with platelets. Can convert epoxy fatty acids to hydroperoxy-epoxides derivatives followed by an intramolecular nucleophilic substitution leading to the formation of monocyclic endoperoxides. Plays an important role during the maintenance of self-tolerance by peroxidizing membrane-bound phosphatidylethanolamine which can then signal the sorting process for clearance of apoptotic cells during inflammation and prevent an autoimmune response. In addition to its role in the immune and inflammatory responses, this enzyme may play a role in epithelial wound healing in the cornea through production of lipoxin A4 (LXA(4)) and docosahexaenoic acid-derived neuroprotectin D1 (NPD1; 10R,17S-HDHA), both lipid autacoids exhibit anti-inflammatory and neuroprotective properties. Furthermore, it may regulate actin polymerization which is crucial for several biological processes such as the phagocytosis of apoptotic cells. It is also implicated in the generation of endogenous ligands for peroxisome proliferator activated receptor (PPAR-gamma), hence modulating macrophage development and function. It may also exert a negative effect on skeletal development by regulating bone mass through this pathway. As well as participates in ER stress and downstream inflammation in adipocytes, pancreatic islets, and liver. Finally, it is also involved in the cellular response to IL13/interleukin-13. The polypeptide is Polyunsaturated fatty acid lipoxygenase ALOX15 (Sus scrofa (Pig)).